The primary structure comprises 448 residues: Tryptophan dimethylallyltransferase 2 (448 aa).

L-tryptophan contacts are provided by residues 80–81 and glutamate 89; that span reads IL. Substrate contacts are provided by arginine 100, lysine 186, and tyrosine 188. L-tryptophan is bound by residues tyrosine 190 and arginine 249. Residues arginine 262, lysine 264, tyrosine 266, glutamine 348, tyrosine 350, tyrosine 414, and tyrosine 418 each coordinate substrate.

Belongs to the tryptophan dimethylallyltransferase family. In terms of assembly, homodimer.

It carries out the reaction L-tryptophan + dimethylallyl diphosphate = 4-(3-methylbut-2-enyl)-L-tryptophan + diphosphate. Its pathway is alkaloid biosynthesis; ergot alkaloid biosynthesis. In terms of biological role, catalyzes the first step of ergot alkaloid biosynthesis. Ergot alkaloids, which are produced by endophyte fungi, can enhance plant host fitness, but also cause livestock toxicosis to host plants. The chain is Tryptophan dimethylallyltransferase 2 (dmaW2) from Claviceps purpurea (strain 20.1) (Ergot fungus).